The sequence spans 138 residues: MIKSSAKHNDFGLTPDLTPLLDIIFIVMVFLLLTASVRLESLEVALPTTDSPVVNEVNKESITVNILATEPYWAIDGKPYLDWHNFSLALLESVQVDKRPVVIAADQGAEVQQLVKLLSFLQENGIQATQLLTEPSHS.

The Cytoplasmic segment spans residues Met-1–Asp-16. A helical membrane pass occupies residues Leu-17–Val-37. Over Arg-38–Ser-138 the chain is Periplasmic.

This sequence belongs to the ExbD/TolR family. As to quaternary structure, the accessory proteins ExbB and ExbD seem to form a complex with TonB.

The protein resides in the cell inner membrane. Involved in the TonB-dependent energy-dependent transport of various receptor-bound substrates. This Vibrio cholerae serotype O1 (strain ATCC 39315 / El Tor Inaba N16961) protein is Biopolymer transport protein exbD1 (exbD1).